Consider the following 124-residue polypeptide: Small ribosomal subunit protein uS13 (124 aa).

Residues proline 97 to arginine 124 form a disordered region.

The protein belongs to the universal ribosomal protein uS13 family. In terms of assembly, part of the 30S ribosomal subunit. Forms a loose heterodimer with protein S19. Forms two bridges to the 50S subunit in the 70S ribosome.

In terms of biological role, located at the top of the head of the 30S subunit, it contacts several helices of the 16S rRNA. In the 70S ribosome it contacts the 23S rRNA (bridge B1a) and protein L5 of the 50S subunit (bridge B1b), connecting the 2 subunits; these bridges are implicated in subunit movement. Contacts the tRNAs in the A and P-sites. This chain is Small ribosomal subunit protein uS13, found in Mycolicibacterium gilvum (strain PYR-GCK) (Mycobacterium gilvum (strain PYR-GCK)).